The chain runs to 418 residues: Gamma-glutamyl phosphate reductase (418 aa).

It belongs to the gamma-glutamyl phosphate reductase family.

Its subcellular location is the cytoplasm. It catalyses the reaction L-glutamate 5-semialdehyde + phosphate + NADP(+) = L-glutamyl 5-phosphate + NADPH + H(+). It participates in amino-acid biosynthesis; L-proline biosynthesis; L-glutamate 5-semialdehyde from L-glutamate: step 2/2. Catalyzes the NADPH-dependent reduction of L-glutamate 5-phosphate into L-glutamate 5-semialdehyde and phosphate. The product spontaneously undergoes cyclization to form 1-pyrroline-5-carboxylate. This Thermodesulfovibrio yellowstonii (strain ATCC 51303 / DSM 11347 / YP87) protein is Gamma-glutamyl phosphate reductase.